The following is a 274-amino-acid chain: Protein RecA (274 aa).

43 to 50 is an ATP binding site; it reads GPESSGKT.

Belongs to the RecA family.

It is found in the cytoplasm. Can catalyze the hydrolysis of ATP in the presence of single-stranded DNA, the ATP-dependent uptake of single-stranded DNA by duplex DNA, and the ATP-dependent hybridization of homologous single-stranded DNAs. It interacts with LexA causing its activation and leading to its autocatalytic cleavage. This is Protein RecA from Neisseria flavescens.